A 124-amino-acid polypeptide reads, in one-letter code: Large ribosomal subunit protein bL12 (124 aa).

This sequence belongs to the bacterial ribosomal protein bL12 family. As to quaternary structure, homodimer. Part of the ribosomal stalk of the 50S ribosomal subunit. Forms a multimeric L10(L12)X complex, where L10 forms an elongated spine to which 2 to 4 L12 dimers bind in a sequential fashion. Binds GTP-bound translation factors.

Its function is as follows. Forms part of the ribosomal stalk which helps the ribosome interact with GTP-bound translation factors. Is thus essential for accurate translation. This is Large ribosomal subunit protein bL12 from Brucella anthropi (strain ATCC 49188 / DSM 6882 / CCUG 24695 / JCM 21032 / LMG 3331 / NBRC 15819 / NCTC 12168 / Alc 37) (Ochrobactrum anthropi).